We begin with the raw amino-acid sequence, 143 residues long: Nucleoside diphosphate kinase (143 aa).

Residues Lys-11, Phe-59, Arg-87, Thr-93, Arg-104, and Asn-114 each contribute to the ATP site. His-117 functions as the Pros-phosphohistidine intermediate in the catalytic mechanism.

This sequence belongs to the NDK family. Homotetramer. Mg(2+) serves as cofactor.

The protein resides in the cytoplasm. The enzyme catalyses a 2'-deoxyribonucleoside 5'-diphosphate + ATP = a 2'-deoxyribonucleoside 5'-triphosphate + ADP. The catalysed reaction is a ribonucleoside 5'-diphosphate + ATP = a ribonucleoside 5'-triphosphate + ADP. Major role in the synthesis of nucleoside triphosphates other than ATP. The ATP gamma phosphate is transferred to the NDP beta phosphate via a ping-pong mechanism, using a phosphorylated active-site intermediate. The chain is Nucleoside diphosphate kinase from Escherichia coli O7:K1 (strain IAI39 / ExPEC).